The following is a 722-amino-acid chain: Solute carrier organic anion transporter family member 4A1 (722 aa).

The tract at residues 1-52 (MPLHQLGDKPLTFPSPNSAMENGLDHTPPSRRASPGTPLSPGSLRSAAHSPL) is disordered. The Cytoplasmic segment spans residues 1–103 (MPLHQLGDKP…PCLQVLNTPK (103 aa)). The residue at position 34 (serine 34) is a Phosphoserine. At threonine 37 the chain carries Phosphothreonine. A phosphoserine mark is found at serine 40, serine 43, serine 46, and serine 50. Residues 104-124 (GILFFLCAAAFLQGMTVNGFI) form a helical membrane-spanning segment. Residues 125–143 (NTVITSLERRYDLHSYQSG) lie on the Extracellular side of the membrane. A helical transmembrane segment spans residues 144–164 (LIASSYDIAACLCLTFVSYFG). Residues 165–170 (GSGHKP) lie on the Cytoplasmic side of the membrane. Residues 171-195 (RWLGWGVLLMGTGSLVFALPHFTAG) form a helical membrane-spanning segment. The Extracellular portion of the chain corresponds to 196-222 (RYEVELDAGVRTCPANPGAVCADSTSG). Residues 223-253 (LSRYQLVFMLGQFLHGVGATPLYTLGVTYLD) form a helical membrane-spanning segment. Over 254–272 (ENVKSSCSPVYIAIFYTAA) the chain is Cytoplasmic. Residues 273 to 293 (ILGPAAGYLIGGALLNIYTEM) traverse the membrane as a helical segment. Topologically, residues 294-307 (GRRTELTTESPLWV) are extracellular. A helical transmembrane segment spans residues 308 to 332 (GAWWVGFLGSGAAAFFTAVPILGYP). At 333–378 (RQLPGSQRYAVMRAAEMHQLKDSSRGEASNPDFGKTIRDLPLSIWL) the chain is on the cytoplasmic side. Residues 379–400 (LLKNPTFILLCLAGATEATLIT) traverse the membrane as a helical segment. Residues 401–420 (GMSTFSPKFLESQFSLSASE) lie on the Extracellular side of the membrane. The chain crosses the membrane as a helical span at residues 421–444 (AATLFGYLVVPAGGGGTFLGGFFV). The Cytoplasmic segment spans residues 445 to 448 (NKLR). A helical membrane pass occupies residues 449 to 471 (LRGSAVIKFCLFCTVVSLLGILV). The Extracellular portion of the chain corresponds to 472–580 (FSLHCPSVPM…TSTCQRKPLL (109 aa)). A Kazal-like domain is found at 498–555 (LNLTAPCNAACSCQPEHYSPVCGSDGLMYFSLCHAGCPAATETNVDGQKVYRDCSCIP). Asparagine 499 carries N-linked (GlcNAc...) asparagine glycosylation. Disulfide bonds link cysteine 504-cysteine 534, cysteine 510-cysteine 530, and cysteine 519-cysteine 553. A glycan (N-linked (GlcNAc...) asparagine) is linked at asparagine 557. A helical transmembrane segment spans residues 581 to 603 (LVFIFVVIFFTFLSSIPALTATL). Residues 604–612 (RCVRDPQRS) lie on the Cytoplasmic side of the membrane. A helical transmembrane segment spans residues 613–638 (FALGIQWIVVRILGGIPGPIAFGWVI). Topologically, residues 639 to 671 (DKACLLWQDQCGQQGSCLVYQNSAMSRYILIMG) are extracellular. The chain crosses the membrane as a helical span at residues 672-689 (LLYKVLGVLFFAIACFLY). The Cytoplasmic portion of the chain corresponds to 690–722 (KPLSESSDGLETCLPSQSSAPDSATDSQLQSSV). Residues 703-722 (LPSQSSAPDSATDSQLQSSV) form a disordered region.

It belongs to the organo anion transporter (TC 2.A.60) family. As to expression, widely expressed. Expressed in placental trophoblasts. Expressed in pancreas, kidney, skeletal muscle, liver, lung, brain, heart, colon, small intestine, ovary, testis, prostate, thymus and spleen. In testis, primarily localized to Leydig cells.

The protein localises to the cell membrane. It carries out the reaction 3,3',5-triiodo-L-thyronine(out) + L-glutamate(in) = 3,3',5-triiodo-L-thyronine(in) + L-glutamate(out). The catalysed reaction is L-thyroxine(out) + L-glutamate(in) = L-thyroxine(in) + L-glutamate(out). The enzyme catalyses estrone 3-sulfate(out) + L-glutamate(in) = estrone 3-sulfate(in) + L-glutamate(out). It catalyses the reaction taurocholate(out) + L-glutamate(in) = taurocholate(in) + L-glutamate(out). It carries out the reaction 3,3',5-triiodo-L-thyronine(out) = 3,3',5-triiodo-L-thyronine(in). The catalysed reaction is L-thyroxine(out) = L-thyroxine(in). The enzyme catalyses 3,3',5'-triiodo-L-thyronine(out) = 3,3',5'-triiodo-L-thyronine(in). It catalyses the reaction estrone 3-sulfate(out) = estrone 3-sulfate(in). It carries out the reaction 17beta-estradiol 17-O-(beta-D-glucuronate)(out) = 17beta-estradiol 17-O-(beta-D-glucuronate)(in). The catalysed reaction is taurocholate(out) = taurocholate(in). The enzyme catalyses prostaglandin E2(out) = prostaglandin E2(in). In terms of biological role, organic anion antiporter with apparent broad substrate specificity. Recognizes various substrates including thyroid hormones 3,3',5-triiodo-L-thyronine (T3), L-thyroxine (T4) and 3,3',5'-triiodo-L-thyronine (rT3), conjugated steroids such as estrone 3-sulfate and estradiol 17-beta glucuronide, bile acids such as taurocholate and prostanoids such as prostaglandin E2, likely operating in a tissue-specific manner. May be involved in uptake of metabolites from the circulation into organs such as kidney, liver or placenta. Possibly drives the selective transport of thyroid hormones and estrogens coupled to an outward glutamate gradient across the microvillous membrane of the placenta. The transport mechanism, its electrogenicity and potential tissue-specific counterions remain to be elucidated. The chain is Solute carrier organic anion transporter family member 4A1 (SLCO4A1) from Homo sapiens (Human).